The following is a 157-amino-acid chain: MKLSHLDEKNHPKMVDVSDKNITSRMATASGVIYMSQEAFDVIKNNTAKKGPVLQTAIVAAIMGAKKTSEIIPMCHPLMLSKIETDIVEFVKECAFKLIVTVKCEGKTGVEMEALSGVSIGLLTIYDMIKAIDKSMRITDIVLESKEGGKSGKFVRY.

Substrate contacts are provided by residues 74–76 (MCH) and 112–113 (ME). Residue D127 is part of the active site.

Belongs to the MoaC family. Homohexamer; trimer of dimers.

It catalyses the reaction (8S)-3',8-cyclo-7,8-dihydroguanosine 5'-triphosphate = cyclic pyranopterin phosphate + diphosphate. It participates in cofactor biosynthesis; molybdopterin biosynthesis. In terms of biological role, catalyzes the conversion of (8S)-3',8-cyclo-7,8-dihydroguanosine 5'-triphosphate to cyclic pyranopterin monophosphate (cPMP). The protein is Cyclic pyranopterin monophosphate synthase of Campylobacter jejuni subsp. doylei (strain ATCC BAA-1458 / RM4099 / 269.97).